We begin with the raw amino-acid sequence, 285 residues long: MARTASTILFLLCLVLITGYTMARQEHCNLPLEKGKCGGRFERFYYNSHKGKCESFFYGGCSGNDNNFENEEECDKACGAFMTMADANSFCNLPAVVGRCKGYFPRYFYNTEAGKCQRFIYGGCGGNRNNFETVXDCRATCHPREKRALADMTMADANSFCQLPAVVGRCRGRFPRYYYNTEAGKCQRFIYGGCXGNRNNFETVEDCRATCHPREKRALADMTMADANSFCQLPAVVGKCRGYFPRYYYNTEAGKCQQFIYGGCGGNRNNFETVEDCRATCHSHA.

The signal sequence occupies residues Met-1–Ala-23. The propeptide occupies Arg-24 to Ala-87. BPTI/Kunitz inhibitor domains are found at residues Cys-28–Cys-78, Cys-91–Cys-141, Cys-161–Cys-211, and Cys-231–Cys-281. Cystine bridges form between Cys-28–Cys-78, Cys-37–Cys-61, Cys-53–Cys-74, Cys-91–Cys-141, Cys-100–Cys-124, Cys-116–Cys-137, Cys-161–Cys-211, Cys-170–Cys-194, Cys-186–Cys-207, Cys-231–Cys-281, Cys-240–Cys-264, and Cys-256–Cys-277. The propeptide occupies Lys-146–Ala-225.

It belongs to the venom Kunitz-type family. Sea anemone type 2 potassium channel toxin subfamily. As to expression, mostly expressed in the mesenterial filaments, with relatively low levels (3-4 fold) of expression in the acrorhagi. Expression levels in tentacles are detectable, but very low.

It is found in the secreted. Its subcellular location is the nematocyst. May be involved in regulating functions and processes within the digestive system. Shows serine protease inhibitory activities. Strongly inhibits trypsin (Ki=0.05 nM), chymotrypsin (Ki=7.4 nM), and kallikreins (KLK5, KLK7 and KLK14). Its function is as follows. May be involved in regulating functions and processes within the digestive system. Shows serine protease inhibitory activities. Strongly inhibits trypsin (Ki=0.08 nM), chymotrypsin (Ki=2.9 nM), and kallikreins (KLK5, KLK7 and KLK14). The polypeptide is Actinia tenebrosa protease inhibitors (Actinia tenebrosa (Australian red waratah sea anemone)).